Here is a 63-residue protein sequence, read N- to C-terminus: Cecropin-C (63 aa).

An N-terminal signal peptide occupies residues 1 to 23; it reads MNFYKIFVFVALILAISIGQSEA. Residue R62 is modified to Arginine amide.

This sequence belongs to the cecropin family.

The protein localises to the secreted. In terms of biological role, cecropins have lytic and antibacterial activity against several Gram-positive and Gram-negative bacteria. The polypeptide is Cecropin-C (CecC) (Drosophila mauritiana (Fruit fly)).